A 352-amino-acid chain; its full sequence is Ion-translocating oxidoreductase complex subunit D (352 aa).

The next 5 helical transmembrane spans lie at 20-40 (IMLL…WFFG), 42-62 (GTLV…ALVL), 78-109 (ALLT…VIIA), 123-143 (PAMI…TSWL), and 148-168 (IAVN…GHTA). Thr-187 is modified (FMN phosphoryl threonine). Helical transmembrane passes span 214–234 (ILAG…GVWL), 242–262 (WHIP…GWLF), 267–287 (LAAP…FFIL), 301–321 (LIFG…GGYP), and 322–342 (DGVA…DYYT).

It belongs to the NqrB/RnfD family. As to quaternary structure, the complex is composed of six subunits: RsxA, RsxB, RsxC, RsxD, RsxE and RsxG. The cofactor is FMN.

The protein resides in the cell inner membrane. In terms of biological role, part of a membrane-bound complex that couples electron transfer with translocation of ions across the membrane. Required to maintain the reduced state of SoxR. The polypeptide is Ion-translocating oxidoreductase complex subunit D (Escherichia coli O139:H28 (strain E24377A / ETEC)).